A 331-amino-acid polypeptide reads, in one-letter code: Biotin synthase (331 aa).

The Radical SAM core domain maps to 52-281 (FFQNKVKLNM…TKEIRVSGGR (230 aa)). Cys-70, Cys-74, and Cys-77 together coordinate [4Fe-4S] cluster. Positions 114, 146, 206, and 276 each coordinate [2Fe-2S] cluster.

It belongs to the radical SAM superfamily. Biotin synthase family. In terms of assembly, homodimer. The cofactor is [4Fe-4S] cluster. Requires [2Fe-2S] cluster as cofactor.

It catalyses the reaction (4R,5S)-dethiobiotin + (sulfur carrier)-SH + 2 reduced [2Fe-2S]-[ferredoxin] + 2 S-adenosyl-L-methionine = (sulfur carrier)-H + biotin + 2 5'-deoxyadenosine + 2 L-methionine + 2 oxidized [2Fe-2S]-[ferredoxin]. The protein operates within cofactor biosynthesis; biotin biosynthesis; biotin from 7,8-diaminononanoate: step 2/2. Functionally, catalyzes the conversion of dethiobiotin (DTB) to biotin by the insertion of a sulfur atom into dethiobiotin via a radical-based mechanism. In Bacillus pumilus (strain SAFR-032), this protein is Biotin synthase.